We begin with the raw amino-acid sequence, 615 residues long: 1-deoxy-D-xylulose-5-phosphate synthase (615 aa).

Residues H72 and 111–113 (GHS) contribute to the thiamine diphosphate site. D142 serves as a coordination point for Mg(2+). Thiamine diphosphate contacts are provided by residues 143-144 (GA), N171, Y278, and E360. N171 provides a ligand contact to Mg(2+).

Belongs to the transketolase family. DXPS subfamily. As to quaternary structure, homodimer. Mg(2+) serves as cofactor. Requires thiamine diphosphate as cofactor.

The enzyme catalyses D-glyceraldehyde 3-phosphate + pyruvate + H(+) = 1-deoxy-D-xylulose 5-phosphate + CO2. It participates in metabolic intermediate biosynthesis; 1-deoxy-D-xylulose 5-phosphate biosynthesis; 1-deoxy-D-xylulose 5-phosphate from D-glyceraldehyde 3-phosphate and pyruvate: step 1/1. Its function is as follows. Catalyzes the acyloin condensation reaction between C atoms 2 and 3 of pyruvate and glyceraldehyde 3-phosphate to yield 1-deoxy-D-xylulose-5-phosphate (DXP). The chain is 1-deoxy-D-xylulose-5-phosphate synthase from Campylobacter jejuni (strain RM1221).